A 603-amino-acid chain; its full sequence is NADH-ubiquinone oxidoreductase chain 5 (603 aa).

Transmembrane regions (helical) follow at residues 4 to 24 (YATMTTLALTSLIPPILTTFI), 38 to 58 (SIVASTFIISLFPTTMFLCLD), 87 to 107 (MMFIPVALFVTWSIMEFSLWY), 114 to 134 (INQFFKYLLIFLITMLILVTA), 140 to 160 (LFIGWEGVGIMSFLLIGWWYA), 171 to 191 (AILYNRIGDIGFILALAWFLL), 210 to 230 (LIPLLGFLLAAAGKSAQLGLH), 241 to 261 (TPVSALLHSSTMVVAGVFLLI), 272 to 292 (LAQTLTLCLGAITTLFAAVCA), 301 to 320 (IVAFSTSSQLGLMVATIGIG), 325 to 347 (AFLHICTHAFFKAMLFMCSGSII), 370 to 390 (STSLAIGSLALMGMPFLTGFY), 407 to 429 (WALSIILIATSLTSAYSTRMILL), 457 to 477 (LTIGSLFAGFFITNNILPTSV), 482 to 502 (IPLYLKLTALSITLLGLLTAL), 537 to 557 (IPYLGLLMSQNLPLLLLDLIW), and 582 to 602 (GLIKLYFLSFFFPLLLILLLI).

This sequence belongs to the complex I subunit 5 family. Core subunit of respiratory chain NADH dehydrogenase (Complex I) which is composed of 45 different subunits.

It localises to the mitochondrion inner membrane. It carries out the reaction a ubiquinone + NADH + 5 H(+)(in) = a ubiquinol + NAD(+) + 4 H(+)(out). Functionally, core subunit of the mitochondrial membrane respiratory chain NADH dehydrogenase (Complex I) which catalyzes electron transfer from NADH through the respiratory chain, using ubiquinone as an electron acceptor. Essential for the catalytic activity and assembly of complex I. This chain is NADH-ubiquinone oxidoreductase chain 5 (MT-ND5), found in Gorilla gorilla gorilla (Western lowland gorilla).